Consider the following 424-residue polypeptide: Tyrosine--tRNA ligase (424 aa).

Y36 is an L-tyrosine binding site. The 'HIGH' region motif lies at P41–H50. The L-tyrosine site is built by Y171 and Q175. The short motif at K231–S235 is the 'KMSKS' region element. K234 serves as a coordination point for ATP. An S4 RNA-binding domain is found at D356 to G413.

This sequence belongs to the class-I aminoacyl-tRNA synthetase family. TyrS type 1 subfamily. Homodimer.

Its subcellular location is the cytoplasm. The catalysed reaction is tRNA(Tyr) + L-tyrosine + ATP = L-tyrosyl-tRNA(Tyr) + AMP + diphosphate + H(+). Functionally, catalyzes the attachment of tyrosine to tRNA(Tyr) in a two-step reaction: tyrosine is first activated by ATP to form Tyr-AMP and then transferred to the acceptor end of tRNA(Tyr). The polypeptide is Tyrosine--tRNA ligase (Mycobacterium bovis (strain ATCC BAA-935 / AF2122/97)).